The chain runs to 263 residues: Aminoglycoside 3'-phosphotransferase (263 aa).

The active-site Proton acceptor is aspartate 183.

Belongs to the aminoglycoside phosphotransferase family.

The enzyme catalyses kanamycin A + ATP = kanamycin 3'-phosphate + ADP + H(+). Its function is as follows. Resistance to kanamycin and structurally-related aminoglycosides, including amikacin. In Streptomyces ribosidificus, this protein is Aminoglycoside 3'-phosphotransferase (rph).